We begin with the raw amino-acid sequence, 93 residues long: Co-chaperonin GroES (93 aa).

The protein belongs to the GroES chaperonin family. As to quaternary structure, heptamer of 7 subunits arranged in a ring. Interacts with the chaperonin GroEL.

The protein localises to the cytoplasm. Together with the chaperonin GroEL, plays an essential role in assisting protein folding. The GroEL-GroES system forms a nano-cage that allows encapsulation of the non-native substrate proteins and provides a physical environment optimized to promote and accelerate protein folding. GroES binds to the apical surface of the GroEL ring, thereby capping the opening of the GroEL channel. This Streptococcus sanguinis protein is Co-chaperonin GroES.